The chain runs to 402 residues: Coiled-coil domain-containing protein 188 (402 aa).

3 disordered regions span residues 1-30 (MEGL…GGGL), 50-74 (HSVQ…EGEA), and 108-131 (HPGS…PCPC). The stretch at 154–189 (GLLGSAEQSFLQLEQENHSLKRQNQELREQLGALLG) forms a coiled coil. Residues 347–363 (LLLGALLVWTAAYVYVV) traverse the membrane as a helical segment.

It localises to the membrane. The polypeptide is Coiled-coil domain-containing protein 188 (Homo sapiens (Human)).